The primary structure comprises 582 residues: Protein alan shepard (582 aa).

The segment covering 1-12 (MHPRYSPAPPPQ) has biased composition (pro residues). A disordered region spans residues 1–73 (MHPRYSPAPP…AAPPTSRSAF (73 aa)). Tyr-5 is modified (phosphotyrosine). The segment covering 13-24 (QQQQMGGPLHQQ) has biased composition (low complexity). Positions 25–36 (QGGGGGGGGGIR) are enriched in gly residues. Residues 39 to 57 (SNAQQLPPQIPRSQNYSNG) show a composition bias toward polar residues. Over residues 58–72 (SSSSAAAAPPTSRSA) the composition is skewed to low complexity. Phosphotyrosine occurs at positions 125 and 142. The segment at 164-225 (PATTTYGQRV…TVQNQNQQGG (62 aa)) is disordered. Over residues 178–225 (SPSNTNSSSSSNTGSQSGTLSTSLSNTTNTNTNMGPNGTVQNQNQQGG) the composition is skewed to low complexity. RRM domains follow at residues 231 to 304 (TNLY…MAKQ) and 310 to 389 (TNLY…FADG). The segment at 555–582 (PMTDSEQASTAASPDEAYTQYPHQAAPK) is disordered.

In terms of biological role, has a role in the perception of gravity. The polypeptide is Protein alan shepard (Drosophila yakuba (Fruit fly)).